Here is a 206-residue protein sequence, read N- to C-terminus: Histidine biosynthesis bifunctional protein HisIE (206 aa).

The segment at 1 to 117 is phosphoribosyl-AMP cyclohydrolase; that stretch reads MGSNEVATGD…SCFPSAPGQF (117 aa). The phosphoribosyl-ATP pyrophosphohydrolase stretch occupies residues 118–206; sequence LGSLDALVAE…AAALLESRHQ (89 aa).

It in the N-terminal section; belongs to the PRA-CH family. In the C-terminal section; belongs to the PRA-PH family.

The protein resides in the cytoplasm. It catalyses the reaction 1-(5-phospho-beta-D-ribosyl)-ATP + H2O = 1-(5-phospho-beta-D-ribosyl)-5'-AMP + diphosphate + H(+). The enzyme catalyses 1-(5-phospho-beta-D-ribosyl)-5'-AMP + H2O = 1-(5-phospho-beta-D-ribosyl)-5-[(5-phospho-beta-D-ribosylamino)methylideneamino]imidazole-4-carboxamide. Its pathway is amino-acid biosynthesis; L-histidine biosynthesis; L-histidine from 5-phospho-alpha-D-ribose 1-diphosphate: step 2/9. The protein operates within amino-acid biosynthesis; L-histidine biosynthesis; L-histidine from 5-phospho-alpha-D-ribose 1-diphosphate: step 3/9. In Xanthomonas axonopodis pv. citri (strain 306), this protein is Histidine biosynthesis bifunctional protein HisIE.